The chain runs to 604 residues: Complement factor I (604 aa).

A signal peptide spans 1–18 (MKLALLILLLLNPHLSSS). 20 cysteine pairs are disulfide-bonded: C36–C260, C46–C57, C51–C62, C64–C96, C70–C89, C78–C109, C144–C186, C157–C219, C191–C201, C234–C252, C246–C261, C264–C276, C271–C289, C283–C298, C349–C474, C387–C403, C395–C465, C488–C552, C516–C531, and C542–C571. N40 carries N-linked (GlcNAc...) asparagine glycosylation. The Kazal-like domain occupies 58 to 111 (IEGTCACKLPYQCPKAGTPVCATNGRGYPTYCHLKSFECLHPEIKFSNNGTCTA). N-linked (GlcNAc...) asparagine glycosylation is found at N106, N116, and N182. An SRCR domain is found at 117-217 (VSLIYGSTDT…SKAPHGLAGV (101 aa)). LDL-receptor class A domains lie at 218–262 (VCYT…LCCK) and 263–299 (GCRG…SGCE). Ca(2+) contacts are provided by K244, D247, V249, D251, D257, and E258. Ca(2+) contacts are provided by N284, E286, D288, D294, and E295. A Peptidase S1 domain is found at 362–595 (VVGGKPAEMG…YFDWISYYVG (234 aa)). Residues H402 and D450 each act as charge relay system in the active site. N515 carries N-linked (GlcNAc...) asparagine glycosylation. Residue S546 is the Charge relay system of the active site. N-linked (GlcNAc...) asparagine glycosylation is present at N557.

This sequence belongs to the peptidase S1 family. Heterodimer of a light and heavy chains; disulfide-linked. The fully processed and mature protein circulates as a zymogen, and is allosterically activated by substrate-induced remodeling of the active site. Interacts with C3b. Interacts with complement factor H. In terms of tissue distribution, expressed in the liver by hepatocytes. Also present in other cells such as monocytes, fibroblasts or keratinocytes.

It localises to the secreted. The protein resides in the extracellular space. The enzyme catalyses Inactivates complement subcomponents C3b, iC3b and C4b by proteolytic cleavage.. Its function is as follows. Trypsin-like serine protease that plays an essential role in regulating the immune response by controlling all complement pathways. Inhibits these pathways by cleaving three peptide bonds in the alpha-chain of C3b and two bonds in the alpha-chain of C4b thereby inactivating these proteins. Essential cofactors for these reactions include factor H and C4BP in the fluid phase and membrane cofactor protein/CD46 and CR1 on cell surfaces. The presence of these cofactors on healthy cells allows degradation of deposited C3b by CFI in order to prevent undesired complement activation, while in apoptotic cells or microbes, the absence of such cofactors leads to C3b-mediated complement activation and subsequent opsonization. The chain is Complement factor I (Cfi) from Rattus norvegicus (Rat).